A 200-amino-acid polypeptide reads, in one-letter code: Imidazoleglycerol-phosphate dehydratase (200 aa).

Belongs to the imidazoleglycerol-phosphate dehydratase family.

It is found in the cytoplasm. It carries out the reaction D-erythro-1-(imidazol-4-yl)glycerol 3-phosphate = 3-(imidazol-4-yl)-2-oxopropyl phosphate + H2O. Its pathway is amino-acid biosynthesis; L-histidine biosynthesis; L-histidine from 5-phospho-alpha-D-ribose 1-diphosphate: step 6/9. In Renibacterium salmoninarum (strain ATCC 33209 / DSM 20767 / JCM 11484 / NBRC 15589 / NCIMB 2235), this protein is Imidazoleglycerol-phosphate dehydratase.